We begin with the raw amino-acid sequence, 329 residues long: Beta-ketoacyl-[acyl-carrier-protein] synthase III (329 aa).

Active-site residues include cysteine 113 and histidine 255. Positions 256 to 260 (QANQR) are ACP-binding. Asparagine 285 is a catalytic residue.

The protein belongs to the thiolase-like superfamily. FabH family. Homodimer.

The protein resides in the cytoplasm. The enzyme catalyses malonyl-[ACP] + acetyl-CoA + H(+) = 3-oxobutanoyl-[ACP] + CO2 + CoA. It functions in the pathway lipid metabolism; fatty acid biosynthesis. Its function is as follows. Catalyzes the condensation reaction of fatty acid synthesis by the addition to an acyl acceptor of two carbons from malonyl-ACP. Catalyzes the first condensation reaction which initiates fatty acid synthesis and may therefore play a role in governing the total rate of fatty acid production. Possesses both acetoacetyl-ACP synthase and acetyl transacylase activities. Its substrate specificity determines the biosynthesis of branched-chain and/or straight-chain of fatty acids. This is Beta-ketoacyl-[acyl-carrier-protein] synthase III from Chlorobaculum tepidum (strain ATCC 49652 / DSM 12025 / NBRC 103806 / TLS) (Chlorobium tepidum).